The primary structure comprises 175 residues: ATP synthase subunit b (175 aa).

A helical transmembrane segment spans residues 20-40 (LIFWTAVTFVIVLLILKQLAW).

It belongs to the ATPase B chain family. As to quaternary structure, F-type ATPases have 2 components, F(1) - the catalytic core - and F(0) - the membrane proton channel. F(1) has five subunits: alpha(3), beta(3), gamma(1), delta(1), epsilon(1). F(0) has four main subunits: a(1), b(2) and c(10-14). The alpha and beta chains form an alternating ring which encloses part of the gamma chain. F(1) is attached to F(0) by a central stalk formed by the gamma and epsilon chains, while a peripheral stalk is formed by the delta and b chains.

Its subcellular location is the cell inner membrane. F(1)F(0) ATP synthase produces ATP from ADP in the presence of a proton or sodium gradient. F-type ATPases consist of two structural domains, F(1) containing the extramembraneous catalytic core and F(0) containing the membrane proton channel, linked together by a central stalk and a peripheral stalk. During catalysis, ATP synthesis in the catalytic domain of F(1) is coupled via a rotary mechanism of the central stalk subunits to proton translocation. In terms of biological role, component of the F(0) channel, it forms part of the peripheral stalk, linking F(1) to F(0). The chain is ATP synthase subunit b from Chlorobium limicola (strain DSM 245 / NBRC 103803 / 6330).